Here is a 316-residue protein sequence, read N- to C-terminus: tRNA dimethylallyltransferase (316 aa).

ATP is bound at residue 17-24 (GPTASGKT). 19–24 (TASGKT) is a binding site for substrate. 4 interaction with substrate tRNA regions span residues 42-45 (DSAL), 166-170 (QRLSR), 247-252 (RCVGYR), and 280-287 (KRQITWLR).

Belongs to the IPP transferase family. In terms of assembly, monomer. Mg(2+) serves as cofactor.

It carries out the reaction adenosine(37) in tRNA + dimethylallyl diphosphate = N(6)-dimethylallyladenosine(37) in tRNA + diphosphate. Functionally, catalyzes the transfer of a dimethylallyl group onto the adenine at position 37 in tRNAs that read codons beginning with uridine, leading to the formation of N6-(dimethylallyl)adenosine (i(6)A). The polypeptide is tRNA dimethylallyltransferase (Escherichia coli O6:K15:H31 (strain 536 / UPEC)).